A 205-amino-acid chain; its full sequence is MNFPSKLLEDAVLEISKLPGIGKKTALRLVLHLLKKESKESESLANALLNARENIRYCKKCHTISDHELCAICTSNKRDKRVVCIVEDIRDVLAIENTNQYFGVYHVIGGVISPMERIGPDQLNINSLIERVITDTEIKEIILGLSPTMEGDTTAFFITKKLKSYPIKISTIARGIPFGGELEYMDEVTLGRSIATRTLFETKED.

A C4-type zinc finger spans residues cysteine 58–cysteine 73. The region spanning arginine 81–proline 177 is the Toprim domain.

Belongs to the RecR family.

Its function is as follows. May play a role in DNA repair. It seems to be involved in an RecBC-independent recombinational process of DNA repair. It may act with RecF and RecO. The protein is Recombination protein RecR of Cytophaga hutchinsonii (strain ATCC 33406 / DSM 1761 / CIP 103989 / NBRC 15051 / NCIMB 9469 / D465).